The chain runs to 247 residues: ATP synthase subunit a, chloroplastic (247 aa).

5 helical membrane-spanning segments follow: residues 38-58, 95-115, 134-154, 199-219, and 220-240; these read QVLI…TLAV, VPFI…GALL, INTT…AGLS, LVVV…VMFL, and GLFT…AYIG.

This sequence belongs to the ATPase A chain family. In terms of assembly, F-type ATPases have 2 components, CF(1) - the catalytic core - and CF(0) - the membrane proton channel. CF(1) has five subunits: alpha(3), beta(3), gamma(1), delta(1), epsilon(1). CF(0) has four main subunits: a, b, b' and c.

The protein localises to the plastid. It localises to the chloroplast thylakoid membrane. In terms of biological role, key component of the proton channel; it plays a direct role in the translocation of protons across the membrane. The polypeptide is ATP synthase subunit a, chloroplastic (Lemna minor (Common duckweed)).